A 571-amino-acid polypeptide reads, in one-letter code: Phototropic-responsive NPH3 family protein NPY1 (571 aa).

One can recognise a BTB domain in the interval 29–97 (SDVTIHVGEV…CYGMTVTLNA (69 aa)). An NPH3 domain is found at 210 to 468 (DWWVEDVCEL…VQVLYFEQLR (259 aa)). Y409 carries the phosphotyrosine modification. The segment at 475–571 (ASVAASSHSP…SSRRRRHSIS (97 aa)) is disordered. Residues 484 to 504 (PVEKTEENKGEEATKKVELSK) are compositionally biased toward basic and acidic residues. Positions 540–562 (SNKSSEVSSGSSQSPPAKSSSSS) are enriched in low complexity.

The protein belongs to the NPH3 family. In terms of assembly, component of a complex made of PINs (e.g. PIN1 and PIN2), MAB4/MELs (e.g. NPY1/MAB4 and NPY5/MEL1) and AGC kinases (e.g. D6PK and PID) at the plasma membrane. Binds directly to PIN2 and PID. In terms of tissue distribution, accumulates in organ primordia such as cotyledons, leaves and floral organs. Expressed mainly in the apical regions of embryos including cotyledon tips and the apical meristem. Induced by the transcription factor ARF5/MP at the periphery of inflorescence meristems. Highly expressed in primary root tips and radicles.

It is found in the late endosome. The protein resides in the cell membrane. The protein localises to the cytoplasm. It localises to the cytosol. The protein operates within protein modification; protein ubiquitination. Functionally, may act as a substrate-specific adapter of an E3 ubiquitin-protein ligase complex (CUL3-RBX1-BTB) which mediates the ubiquitination and subsequent proteasomal degradation of target proteins. Coregulates with PID the auxin-mediated plant organogenesis. Regulates basipetal PIN proteins (e.g. PIN1) polarization to establish inward auxin transport from the L1 surface of incipient organ primordia; this process is essential for the progression of flower organs development. Recruited to the plasma membrane by PINs (e.g. PIN1 and PIN2) and, in concert with AGC kinases-mediated (e.g. D6PK and PID) PINs phosphorylation, maintains their cell polarity (apical or basal) through limiting lateral diffusion-based escape. Induces auxin response in inner cell layers through a shift in PIN1 localization. Influences cotyledon development by regulating auxin distribution mainly in the protodermal cell layer. May play an essential role in root gravitropic responses. The polypeptide is Phototropic-responsive NPH3 family protein NPY1 (Arabidopsis thaliana (Mouse-ear cress)).